The primary structure comprises 435 residues: 26S proteasome regulatory subunit 7 (435 aa).

Over residues Met1 to Asn23 the composition is skewed to basic and acidic residues. Residues Met1–Phe24 form a disordered region. Position 218 to 225 (Gly218 to Thr225) interacts with ATP.

It belongs to the AAA ATPase family.

Its subcellular location is the cytoplasm. The protein localises to the nucleus. Functionally, the 26S proteasome is involved in the ATP-dependent degradation of ubiquitinated proteins. The regulatory (or ATPase) complex confers ATP dependency and substrate specificity to the 26S complex. The chain is 26S proteasome regulatory subunit 7 (rpt-1) from Caenorhabditis elegans.